Here is a 476-residue protein sequence, read N- to C-terminus: Protein Cep89 homolog (476 aa).

Disordered regions lie at residues 1–29 and 172–193; these read MSTRNVMITDLDQPDPNQQQHHQNPKKNR and LGEGAPTCGGSTKVSSSSAPYP. Residues 180-190 show a composition bias toward polar residues; sequence GGSTKVSSSSA.

It is found in the cytoplasm. The protein resides in the cytosol. Its subcellular location is the mitochondrion intermembrane space. In terms of biological role, required for mitochondrial complex IV activity. May be involved in non-associative learning. In Drosophila melanogaster (Fruit fly), this protein is Protein Cep89 homolog (Cep89).